An 88-amino-acid polypeptide reads, in one-letter code: uncharacterized protein (88 aa).

The signal sequence occupies residues 1 to 25 (MRAAFWVGCAALLLSACSSEPVQQA).

This is an uncharacterized protein from Escherichia coli O6:H1 (strain CFT073 / ATCC 700928 / UPEC).